The primary structure comprises 103 residues: uncharacterized protein (103 aa).

It localises to the plastid. The protein localises to the chloroplast. This is an uncharacterized protein from Auxenochlorella pyrenoidosa (Freshwater green alga).